We begin with the raw amino-acid sequence, 129 residues long: Small ribosomal subunit protein uS9 (129 aa).

Residues 104 to 113 (TRDSRVVERK) are compositionally biased toward basic and acidic residues. The tract at residues 104-129 (TRDSRVVERKKPGKRKARRSRQFSKR) is disordered. The segment covering 114–129 (KPGKRKARRSRQFSKR) has biased composition (basic residues).

Belongs to the universal ribosomal protein uS9 family.

The chain is Small ribosomal subunit protein uS9 from Sulfurimonas denitrificans (strain ATCC 33889 / DSM 1251) (Thiomicrospira denitrificans (strain ATCC 33889 / DSM 1251)).